Reading from the N-terminus, the 207-residue chain is Guanylate kinase (207 aa).

The Guanylate kinase-like domain maps to 4–184 (GILFIISAPS…AVNDLITIIT (181 aa)). Residue 11–18 (APSGTGKS) coordinates ATP.

It belongs to the guanylate kinase family.

Its subcellular location is the cytoplasm. The catalysed reaction is GMP + ATP = GDP + ADP. Essential for recycling GMP and indirectly, cGMP. The chain is Guanylate kinase (gmk) from Buchnera aphidicola subsp. Acyrthosiphon pisum (strain APS) (Acyrthosiphon pisum symbiotic bacterium).